The sequence spans 1576 residues: Pentafunctional AROM polypeptide (1576 aa).

A 3-dehydroquinate synthase region spans residues 1 to 387; the sequence is MGSTTFENPT…YEPKASVVED (387 aa). Residues 49-51, 86-89, 117-119, and D122 contribute to the NAD(+) site; these read DTN, ENSK, and GGV. R133 is a binding site for 7-phospho-2-dehydro-3-deoxy-D-arabino-heptonate. 142–143 contributes to the NAD(+) binding site; that stretch reads TT. Positions 149 and 155 each coordinate 7-phospho-2-dehydro-3-deoxy-D-arabino-heptonate. An NAD(+)-binding site is contributed by K164. Position 165 (N165) interacts with 7-phospho-2-dehydro-3-deoxy-D-arabino-heptonate. Residues 182 to 185 and N193 each bind NAD(+); that span reads FLET. E197 contributes to the Zn(2+) binding site. 7-phospho-2-dehydro-3-deoxy-D-arabino-heptonate-binding positions include 197–200 and K253; that span reads EVVK. The Proton acceptor; for 3-dehydroquinate synthase activity role is filled by E263. Residues 267 to 271 and H274 each bind 7-phospho-2-dehydro-3-deoxy-D-arabino-heptonate; that span reads RNILN. H274 is a binding site for Zn(2+). The active-site Proton acceptor; for 3-dehydroquinate synthase activity is the H278. Positions 290 and 359 each coordinate 7-phospho-2-dehydro-3-deoxy-D-arabino-heptonate. Position 290 (H290) interacts with Zn(2+). The segment at 400 to 841 is EPSP synthase; it reads VRPSVPETLN…WDILSKSFQV (442 aa). The active-site For EPSP synthase activity is the C823. Residues 863–1055 form a shikimate kinase region; the sequence is DKSIFIIGMR…RNKPQSFFVS (193 aa). ATP is bound at residue 870 to 877; that stretch reads GMRGAGKT. Residues 1056 to 1276 form a 3-dehydroquinase region; the sequence is LTMPDISGAA…AAPGQLSAAE (221 aa). Catalysis depends on H1179, which acts as the Proton acceptor; for 3-dehydroquinate dehydratase activity. Residue K1207 is the Schiff-base intermediate with substrate; for 3-dehydroquinate dehydratase activity of the active site. Residues 1289–1576 form a shikimate dehydrogenase region; sequence PKSFYLFGTP…RAAVMGDSTA (288 aa).

This sequence in the N-terminal section; belongs to the sugar phosphate cyclases superfamily. Dehydroquinate synthase family. In the 2nd section; belongs to the EPSP synthase family. It in the 3rd section; belongs to the shikimate kinase family. The protein in the 4th section; belongs to the type-I 3-dehydroquinase family. This sequence in the C-terminal section; belongs to the shikimate dehydrogenase family. In terms of assembly, homodimer. The cofactor is Zn(2+).

It is found in the cytoplasm. The catalysed reaction is 7-phospho-2-dehydro-3-deoxy-D-arabino-heptonate = 3-dehydroquinate + phosphate. It carries out the reaction 3-dehydroquinate = 3-dehydroshikimate + H2O. It catalyses the reaction shikimate + NADP(+) = 3-dehydroshikimate + NADPH + H(+). The enzyme catalyses shikimate + ATP = 3-phosphoshikimate + ADP + H(+). The catalysed reaction is 3-phosphoshikimate + phosphoenolpyruvate = 5-O-(1-carboxyvinyl)-3-phosphoshikimate + phosphate. It participates in metabolic intermediate biosynthesis; chorismate biosynthesis; chorismate from D-erythrose 4-phosphate and phosphoenolpyruvate: step 2/7. The protein operates within metabolic intermediate biosynthesis; chorismate biosynthesis; chorismate from D-erythrose 4-phosphate and phosphoenolpyruvate: step 3/7. Its pathway is metabolic intermediate biosynthesis; chorismate biosynthesis; chorismate from D-erythrose 4-phosphate and phosphoenolpyruvate: step 4/7. It functions in the pathway metabolic intermediate biosynthesis; chorismate biosynthesis; chorismate from D-erythrose 4-phosphate and phosphoenolpyruvate: step 5/7. It participates in metabolic intermediate biosynthesis; chorismate biosynthesis; chorismate from D-erythrose 4-phosphate and phosphoenolpyruvate: step 6/7. Functionally, the AROM polypeptide catalyzes 5 consecutive enzymatic reactions in prechorismate polyaromatic amino acid biosynthesis. The sequence is that of Pentafunctional AROM polypeptide from Sclerotinia sclerotiorum (strain ATCC 18683 / 1980 / Ss-1) (White mold).